We begin with the raw amino-acid sequence, 574 residues long: Cell division cycle 7-related protein kinase (574 aa).

Phosphoserine is present on serine 27. One can recognise a Protein kinase domain in the interval 58-574 (FKIEDKIGEG…LHPFFKDMSL (517 aa)). Residues 64–72 (IGEGTFSSV) and lysine 90 each bind ATP. The active-site Proton acceptor is aspartate 177. A Glycyl lysine isopeptide (Lys-Gly) (interchain with G-Cter in SUMO2) cross-link involves residue lysine 268. Threonine 503 is modified (phosphothreonine).

It belongs to the protein kinase superfamily. Ser/Thr protein kinase family. CDC7 subfamily. In terms of assembly, forms a complex with either DBF4/DBF4A or DBF4B, leading to the activation of the kinase activity. Interacts with CLASPIN (via the acidic patch); the interaction is required for phosphorylation of MCM proteins and CLASPIN. Mg(2+) is required as a cofactor.

Its subcellular location is the nucleus. It carries out the reaction L-seryl-[protein] + ATP = O-phospho-L-seryl-[protein] + ADP + H(+). The catalysed reaction is L-threonyl-[protein] + ATP = O-phospho-L-threonyl-[protein] + ADP + H(+). Kinase involved in initiation of DNA replication. Phosphorylates critical substrates that regulate the G1/S phase transition and initiation of DNA replication, such as MCM proteins and CLASPIN. This chain is Cell division cycle 7-related protein kinase, found in Homo sapiens (Human).